The sequence spans 696 residues: Translation initiation factor IF-2 (696 aa).

The tr-type G domain occupies 187-361 (ERPPVVTVMG…EMQEIKGIPD (175 aa)). Positions 196-203 (GHVDHGKT) are G1. 196–203 (GHVDHGKT) contributes to the GTP binding site. The tract at residues 221-225 (GITQS) is G2. The G3 stretch occupies residues 242 to 245 (DTPG). GTP is bound by residues 242–246 (DTPGH) and 296–299 (NKID). Residues 296–299 (NKID) are G4. The interval 333–335 (SAK) is G5.

This sequence belongs to the TRAFAC class translation factor GTPase superfamily. Classic translation factor GTPase family. IF-2 subfamily.

The protein resides in the cytoplasm. One of the essential components for the initiation of protein synthesis. Protects formylmethionyl-tRNA from spontaneous hydrolysis and promotes its binding to the 30S ribosomal subunits. Also involved in the hydrolysis of GTP during the formation of the 70S ribosomal complex. This is Translation initiation factor IF-2 from Thermosipho africanus (strain TCF52B).